A 182-amino-acid polypeptide reads, in one-letter code: MGLSVSKLLNGLFGKKEMRILMVGLDAAGKTTILYKLKLGEIVTTIPTIGFNVETVEYKNISFTVWDVGGQDKIRPLWRHYFQNTQGIIFVVDSNDRERITEAREELQRMLSEDELRDALLLVFANKQDLPNAMNAAEITDKLGLHSLRQRSWYIQAACATSGDGLYEGLEWLSANLKRKSP.

A lipid anchor (N-myristoyl glycine) is attached at G2. GTP-binding positions include 24 to 31, 67 to 71, and 126 to 129; these read GLDAAGKT, DVGGQ, and NKQD.

Belongs to the small GTPase superfamily. Arf family.

It localises to the golgi apparatus. Functionally, GTP-binding protein involved in protein trafficking; may modulate vesicle budding and uncoating within the Golgi apparatus. The chain is ADP-ribosylation factor (ARF) from Cryptococcus neoformans var. neoformans serotype D (strain JEC21 / ATCC MYA-565) (Filobasidiella neoformans).